The chain runs to 1091 residues: Multiple epidermal growth factor-like domains protein 11 (1091 aa).

A signal peptide spans 1–18 (MAPSAVGLLVFLLQAALA). Over 19–847 (LNPEDPNVCS…SPALGAERHS (829 aa)) the chain is Extracellular. The region spanning 23–100 (DPNVCSHWES…YYENGDFCIP (78 aa)) is the EMI domain. 14 cysteine pairs are disulfide-bonded: C27-C88, C53-C62, C87-C98, C102-C117, C119-C128, C145-C153, C147-C160, C162-C171, C184-C196, C190-C203, C205-C214, C227-C239, C233-C246, and C248-C257. EGF-like domains follow at residues 94 to 129 (NGDF…PDCS), 142 to 172 (SNRC…WRCE), 180 to 215 (HGKG…VYCE), 223 to 258 (HGAH…AVCA), 266 to 301 (FGQN…DRCQ), 314 to 344 (SQRC…PSCQ), 398 to 433 (YGNG…EVCA), 441 to 476 (YGPN…LDCS), and 484 to 519 (WGLN…DSCE). The N-linked (GlcNAc...) asparagine glycan is linked to N269. 15 disulfides stabilise this stretch: C270/C282, C276/C289, C291/C300, C317/C325, C319/C332, C334/C343, C402/C414, C408/C421, C423/C432, C445/C457, C451/C464, C466/C475, C488/C500, C494/C507, and C509/C518. N530 carries an N-linked (GlcNAc...) asparagine glycan. EGF-like domains lie at 570 to 605 (WGPN…PLCQ), 613 to 650 (YGHG…ALCN), 658 to 693 (FGQD…KDCS), 706 to 736 (FHTC…LFCT), 749 to 779 (GHIC…RHCE), and 787 to 822 (FGYG…IRCD). Cystine bridges form between C574–C586, C580–C593, C595–C604, C617–C631, C621–C638, C640–C649, C662–C674, C668–C681, C683–C692, C709–C717, C711–C724, C726–C735, C752–C760, C754–C767, C769–C778, C791–C803, C797–C810, and C812–C821. Residues 848 to 868 (VGAVTGIVLLLFLVVVLLGLF) form a helical membrane-spanning segment. Over 869–1091 (AWRRRRQKEK…NIYEVGRCLT (223 aa)) the chain is Cytoplasmic.

The protein belongs to the MEGF family. As to quaternary structure, homomer. Does not interact with MEGF10.

It is found in the cell membrane. The protein resides in the basolateral cell membrane. Its function is as follows. May regulate the mosaic spacing of specific neuron subtypes in the retina through homotypic retinal neuron repulsion. Mosaics provide a mechanism to distribute each cell type evenly across the retina, ensuring that all parts of the visual field have access to a full set of processing elements. The sequence is that of Multiple epidermal growth factor-like domains protein 11 (Megf11) from Mus musculus (Mouse).